Reading from the N-terminus, the 470-residue chain is Glutamate--tRNA ligase 1 (470 aa).

The 'HIGH' region signature appears at 8 to 18 (PSPTGYLHVGG). A 'KMSKS' region motif is present at residues 250-254 (KLSKR). K253 contacts ATP.

Belongs to the class-I aminoacyl-tRNA synthetase family. Glutamate--tRNA ligase type 1 subfamily. As to quaternary structure, monomer.

The protein localises to the cytoplasm. It carries out the reaction tRNA(Glu) + L-glutamate + ATP = L-glutamyl-tRNA(Glu) + AMP + diphosphate. In terms of biological role, catalyzes the attachment of glutamate to tRNA(Glu) in a two-step reaction: glutamate is first activated by ATP to form Glu-AMP and then transferred to the acceptor end of tRNA(Glu). The sequence is that of Glutamate--tRNA ligase 1 from Pseudothermotoga lettingae (strain ATCC BAA-301 / DSM 14385 / NBRC 107922 / TMO) (Thermotoga lettingae).